A 201-amino-acid chain; its full sequence is Nascent polypeptide-associated complex subunit alpha (201 aa).

Positions 1 to 20 (MANPRVEELPDEEVKKTVVD) are enriched in basic and acidic residues. Disordered regions lie at residues 1–51 (MANP…SRNE) and 118–165 (AQQL…IEDK). Over residues 21–36 (DHDDDSSSDSDGEEET) the composition is skewed to acidic residues. The NAC-A/B domain occupies 48–113 (SRNEKKARKA…AKIEDLNASA (66 aa)). Over residues 126-149 (GHDHDHAGHSHGEAKASEGDAKKE) the composition is skewed to basic and acidic residues. Acidic residues predominate over residues 150-161 (EEDDDEEVDADG). The UBA domain maps to 162 to 200 (IEDKDIELVMTQAGVSRTKAIKALKENDNDIVNSIMALS).

Belongs to the NAC-alpha family. As to quaternary structure, part of the nascent polypeptide-associated complex (NAC), consisting of EGD2 and EGD1. NAC associates with ribosomes via EGD1.

The protein localises to the cytoplasm. It is found in the nucleus. Its function is as follows. Component of the nascent polypeptide-associated complex (NAC), a dynamic component of the ribosomal exit tunnel, protecting the emerging polypeptides from interaction with other cytoplasmic proteins to ensure appropriate nascent protein targeting. The NAC complex also promotes mitochondrial protein import by enhancing productive ribosome interactions with the outer mitochondrial membrane and blocks the inappropriate interaction of ribosomes translating non-secretory nascent polypeptides with translocation sites in the membrane of the endoplasmic reticulum. EGD2 may also be involved in transcription regulation. In Pyricularia oryzae (strain 70-15 / ATCC MYA-4617 / FGSC 8958) (Rice blast fungus), this protein is Nascent polypeptide-associated complex subunit alpha (EGD2).